We begin with the raw amino-acid sequence, 868 residues long: Protein translocase subunit SecA (868 aa).

ATP-binding positions include Gln-85, 103-107 (GEGKT), and Asp-508.

It belongs to the SecA family. Monomer and homodimer. Part of the essential Sec protein translocation apparatus which comprises SecA, SecYEG and auxiliary proteins SecDF. Other proteins may also be involved.

The protein resides in the cell membrane. It is found in the cytoplasm. The enzyme catalyses ATP + H2O + cellular proteinSide 1 = ADP + phosphate + cellular proteinSide 2.. Functionally, part of the Sec protein translocase complex. Interacts with the SecYEG preprotein conducting channel. Has a central role in coupling the hydrolysis of ATP to the transfer of proteins into and across the cell membrane, serving as an ATP-driven molecular motor driving the stepwise translocation of polypeptide chains across the membrane. The sequence is that of Protein translocase subunit SecA from Deinococcus radiodurans (strain ATCC 13939 / DSM 20539 / JCM 16871 / CCUG 27074 / LMG 4051 / NBRC 15346 / NCIMB 9279 / VKM B-1422 / R1).